The sequence spans 297 residues: 4-hydroxy-tetrahydrodipicolinate synthase (297 aa).

Residue Thr47 coordinates pyruvate. Tyr135 (proton donor/acceptor) is an active-site residue. The Schiff-base intermediate with substrate role is filled by Lys163. Ile205 contributes to the pyruvate binding site.

Belongs to the DapA family. As to quaternary structure, homotetramer; dimer of dimers.

It is found in the cytoplasm. The catalysed reaction is L-aspartate 4-semialdehyde + pyruvate = (2S,4S)-4-hydroxy-2,3,4,5-tetrahydrodipicolinate + H2O + H(+). It functions in the pathway amino-acid biosynthesis; L-lysine biosynthesis via DAP pathway; (S)-tetrahydrodipicolinate from L-aspartate: step 3/4. Functionally, catalyzes the condensation of (S)-aspartate-beta-semialdehyde [(S)-ASA] and pyruvate to 4-hydroxy-tetrahydrodipicolinate (HTPA). The polypeptide is 4-hydroxy-tetrahydrodipicolinate synthase (Dehalococcoides mccartyi (strain ATCC BAA-2100 / JCM 16839 / KCTC 5957 / BAV1)).